The sequence spans 106 residues: Urease subunit beta (106 aa).

Belongs to the urease beta subunit family. In terms of assembly, heterotrimer of UreA (gamma), UreB (beta) and UreC (alpha) subunits. Three heterotrimers associate to form the active enzyme.

It localises to the cytoplasm. The enzyme catalyses urea + 2 H2O + H(+) = hydrogencarbonate + 2 NH4(+). It participates in nitrogen metabolism; urea degradation; CO(2) and NH(3) from urea (urease route): step 1/1. This is Urease subunit beta from Prochlorococcus marinus (strain MIT 9301).